A 580-amino-acid polypeptide reads, in one-letter code: Amino-acid acetyltransferase, mitochondrial (580 aa).

In terms of domain architecture, N-acetyltransferase spans 403–560; the sequence is LTMQNLFDDK…NPRHKNGVVN (158 aa).

The protein belongs to the acetyltransferase family.

It is found in the mitochondrion. It carries out the reaction L-glutamate + acetyl-CoA = N-acetyl-L-glutamate + CoA + H(+). It functions in the pathway amino-acid biosynthesis; L-arginine biosynthesis; N(2)-acetyl-L-ornithine from L-glutamate: step 1/4. In terms of biological role, N-acetylglutamate synthase involved in arginine biosynthesis. The polypeptide is Amino-acid acetyltransferase, mitochondrial (ARG2) (Candida dubliniensis (strain CD36 / ATCC MYA-646 / CBS 7987 / NCPF 3949 / NRRL Y-17841) (Yeast)).